Here is a 622-residue protein sequence, read N- to C-terminus: Low affinity potassium transport system protein Kup (622 aa).

12 helical membrane-spanning segments follow: residues 9–29, 46–66, 101–121, 137–157, 165–185, 213–233, 247–267, 276–296, 337–357, 363–383, 395–415, and 416–436; these read LSAVTLAAIGVVYGDIGTSPL, PDVVFGFLSLIFWMLILVVSV, ILVVLGLIGGSFFYGEVVITP, PALDPYIVPCSIAVLTLLFVI, VGKLFAPVMLVWFLTLALLGL, VSFFALGAVVLAITGVEALYA, WFTVVLPSLVLNYFGQGALLL, PFFLLAPDWALIPLLILATLA, IYIPVINWTLYLAVVLVIIGF, LAAAYGIAVTGTMVITSILFC, FLVAFLLMVLLIIDIPMFSAN, and VLKLFSGGWLPLSLGLVMFII.

Belongs to the HAK/KUP transporter (TC 2.A.72) family.

The protein resides in the cell inner membrane. It carries out the reaction K(+)(in) + H(+)(in) = K(+)(out) + H(+)(out). Responsible for the low-affinity transport of potassium into the cell. Likely operates as a K(+):H(+) symporter. This chain is Low affinity potassium transport system protein Kup, found in Yersinia pseudotuberculosis serotype O:1b (strain IP 31758).